The chain runs to 148 residues: uncharacterized protein (148 aa).

Positions 1 to 17 (MEGLQRSTISFRRQGSS) are enriched in polar residues. The disordered stretch occupies residues 1–148 (MEGLQRSTIS…SRRRIVTKKR (148 aa)). 2 stretches are compositionally biased toward basic and acidic residues: residues 36–47 (EQKDESQRDEQP) and 58–67 (KPIDEKDKLR). Phosphoserine is present on residues Ser-100 and Ser-107. Residues 128 to 148 (VNPRKRPPKRRSRRRIVTKKR) show a composition bias toward basic residues.

This is an uncharacterized protein from Arabidopsis thaliana (Mouse-ear cress).